The primary structure comprises 27 residues: M-lycotoxin-Hc2a (27 aa).

In terms of tissue distribution, expressed by the venom gland.

It localises to the secreted. Its function is as follows. Forms pore that permeabilize the cell membrane. Promotes efflux of calcium from synaptosomes, causes hemolysis, and dissipates voltage gradients across muscle membrane. Potently inhibits the growth of bacteria, yeast and Leishmania. May function both in the prey capture strategy as well as protection from infectious organisms arising from prey ingestion. This is M-lycotoxin-Hc2a from Hogna carolinensis (Carolina wolf spider).